Consider the following 311-residue polypeptide: MVGLKPSEVPPTTAVKFLGAGTAACFADLLTFPLDTAKVRLQIQGENQATQAARRIQYRGVLGTILTMVRTEGPRSPYNGLVAGLQRQMSFASIRIGLYDSVKQFYTPKGSDHSSITTRILAGCTTGAMAVSCAQPTDVVKVRFQASIHLGAGSNRKYSGTMDAYRTIAREEGVRGLWKGTLPNITRNAIVNCAEMVTYDIIKEKLLDYHLLTDNFPCHLISAFGAGFCATVVASPVDVVKTRYMNSPPGQYCSPLDCMLKMVTQEGPTAFYKGFTPSFLRLGTWNVVMFVTYEQLKRALMKVQMLRESPF.

Over 1–10 (MVGLKPSEVP) the chain is Mitochondrial intermembrane. A helical membrane pass occupies residues 11 to 32 (PTTAVKFLGAGTAACFADLLTF). Solcar repeat units lie at residues 11–105 (PTTA…VKQF), 114–205 (SSIT…IKEK), and 214–299 (DNFP…LKRA). Over 33–76 (PLDTAKVRLQIQGENQATQAARRIQYRGVLGTILTMVRTEGPRS) the chain is Mitochondrial matrix. A helical membrane pass occupies residues 77–99 (PYNGLVAGLQRQMSFASIRIGLY). Residues 100-119 (DSVKQFYTPKGSDHSSITTR) are Mitochondrial intermembrane-facing. Residues 120–136 (ILAGCTTGAMAVSCAQP) form a helical membrane-spanning segment. Topologically, residues 137-182 (TDVVKVRFQASIHLGAGSNRKYSGTMDAYRTIAREEGVRGLWKGTL) are mitochondrial matrix. Residues 183-199 (PNITRNAIVNCAEMVTY) form a helical membrane-spanning segment. The Mitochondrial intermembrane segment spans residues 200 to 216 (DIIKEKLLDYHLLTDNF). The chain crosses the membrane as a helical span at residues 217 to 236 (PCHLISAFGAGFCATVVASP). The Mitochondrial matrix portion of the chain corresponds to 237-270 (VDVVKTRYMNSPPGQYCSPLDCMLKMVTQEGPTA). A helical membrane pass occupies residues 271 to 293 (FYKGFTPSFLRLGTWNVVMFVTY). The purine nucleotide binding stretch occupies residues 278–300 (SFLRLGTWNVVMFVTYEQLKRAL). Residues 294–311 (EQLKRALMKVQMLRESPF) are Mitochondrial intermembrane-facing.

This sequence belongs to the mitochondrial carrier (TC 2.A.29) family. Interacts with HAX1; the interaction is direct and calcium-dependent.

It is found in the mitochondrion inner membrane. Putative transmembrane transporter that plays a role in mitochondrial metabolism via an as yet unclear mechanism. Originally, this mitochondrial protein was thought to act as a proton transmembrane transporter from the mitochondrial intermembrane space into the matrix, causing proton leaks through the inner mitochondrial membrane, thereby uncoupling mitochondrial membrane potential generation from ATP synthesis. However, this function is controversial and uncoupling may not be the function, or at least not the main function, but rather a consequence of more conventional metabolite transporter activity. The protein is Putative mitochondrial transporter UCP3 of Canis lupus familiaris (Dog).